Reading from the N-terminus, the 1399-residue chain is DNA-directed RNA polymerase subunit beta' (1399 aa).

4 residues coordinate Zn(2+): Cys71, Cys73, Cys86, and Cys89. Mg(2+) is bound by residues Asp462, Asp464, and Asp466. 4 residues coordinate Zn(2+): Cys810, Cys884, Cys891, and Cys894. A disordered region spans residues 1379 to 1399 (KQAAIVPSQPEPQPLALPPAE). A compositionally biased stretch (pro residues) spans 1387 to 1399 (QPEPQPLALPPAE).

This sequence belongs to the RNA polymerase beta' chain family. As to quaternary structure, the RNAP catalytic core consists of 2 alpha, 1 beta, 1 beta' and 1 omega subunit. When a sigma factor is associated with the core the holoenzyme is formed, which can initiate transcription. Mg(2+) is required as a cofactor. Zn(2+) serves as cofactor.

It carries out the reaction RNA(n) + a ribonucleoside 5'-triphosphate = RNA(n+1) + diphosphate. Its function is as follows. DNA-dependent RNA polymerase catalyzes the transcription of DNA into RNA using the four ribonucleoside triphosphates as substrates. This chain is DNA-directed RNA polymerase subunit beta', found in Bradyrhizobium sp. (strain BTAi1 / ATCC BAA-1182).